The chain runs to 272 residues: F-actin-capping protein subunit beta (272 aa).

Serine 2 bears the N-acetylserine mark. Serine 2 bears the Phosphoserine mark. Lysine 235 is modified (N6-acetyllysine). Valine 263 carries the post-translational modification Phosphoserine.

It belongs to the F-actin-capping protein beta subunit family. Component of the F-actin capping complex, composed of a heterodimer of an alpha and a beta subunit. Subunit of dynactin, a multiprotein complex part of a tripartite complex with dynein and a adapter, such as BICDL1, BICD2 or HOOK3. The dynactin complex is built around ACTR1A/ACTB filament and consists of an actin-related filament composed of a shoulder domain, a pointed end and a barbed end. Its length is defined by its flexible shoulder domain. The soulder is composed of 2 DCTN1 subunits, 4 DCTN2 and 2 DCTN3. The 4 DCNT2 (via N-terminus) bind the ACTR1A filament and act as molecular rulers to determine the length. The pointed end is important for binding dynein-dynactin cargo adapters. Consists of 4 subunits: ACTR10, DCNT4, DCTN5 and DCTN6. The barbed end is composed of a CAPZA1:CAPZB heterodimers, which binds ACTR1A/ACTB filament and dynactin and stabilizes dynactin. Interacts with ARHGAP17. Interaction with RCSD1/CAPZIP. Component of the WASH complex, composed of F-actin-capping protein subunit alpha (CAPZA1, CAPZA2 or CAPZA3), F-actin-capping protein subunit beta (CAPZB), WASH (WASHC1, WASH2P, WASH3P, WASH4P, WASH5P or WASH6P), WASHC2 (WASHC2A or WASHC2C), WASHC3, WASHC4 and WASHC5. Interacts with ACTG1. Directly interacts with CRACD; this interaction decreases binding to actin.

Its subcellular location is the cytoplasm. The protein localises to the cytoskeleton. It is found in the myofibril. The protein resides in the sarcomere. F-actin-capping proteins bind in a Ca(2+)-independent manner to the fast growing ends of actin filaments (barbed end) thereby blocking the exchange of subunits at these ends. Unlike other capping proteins (such as gelsolin and severin), these proteins do not sever actin filaments. Plays a role in the regulation of cell morphology and cytoskeletal organization. Forms, with CAPZB, the barbed end of the fast growing ends of actin filaments in the dynactin complex and stabilizes dynactin structure. The dynactin multiprotein complex activates the molecular motor dynein for ultra-processive transport along microtubules. This chain is F-actin-capping protein subunit beta, found in Homo sapiens (Human).